The chain runs to 294 residues: Bifunctional protein FolD (294 aa).

Residues 166-168, Ser-191, and Ile-232 each bind NADP(+); that span reads GRS.

Belongs to the tetrahydrofolate dehydrogenase/cyclohydrolase family. Homodimer.

The catalysed reaction is (6R)-5,10-methylene-5,6,7,8-tetrahydrofolate + NADP(+) = (6R)-5,10-methenyltetrahydrofolate + NADPH. It carries out the reaction (6R)-5,10-methenyltetrahydrofolate + H2O = (6R)-10-formyltetrahydrofolate + H(+). The protein operates within one-carbon metabolism; tetrahydrofolate interconversion. Catalyzes the oxidation of 5,10-methylenetetrahydrofolate to 5,10-methenyltetrahydrofolate and then the hydrolysis of 5,10-methenyltetrahydrofolate to 10-formyltetrahydrofolate. The sequence is that of Bifunctional protein FolD from Nitrobacter hamburgensis (strain DSM 10229 / NCIMB 13809 / X14).